Reading from the N-terminus, the 429-residue chain is Protein arginine N-methyltransferase 2 (429 aa).

Disordered regions lie at residues 41-76 (PEVA…EDHE) and 137-180 (ALDS…EETP). The segment covering 137-163 (ALDSDDEDDEEMAEGEEAQAEDGEEAP) has biased composition (acidic residues). The segment covering 164-174 (ELVAAEEATQT) has biased composition (low complexity). Residues 190–429 (LEEQVTSDKY…YRLPVCTFLG (240 aa)) form the RMT2 domain. S-adenosyl-L-methionine is bound by residues Tyr199, Met228, 250–255 (FGMGII), 271–273 (EAH), 308–309 (WQ), and Asp328.

Belongs to the class I-like SAM-binding methyltransferase superfamily. RMT2 methyltransferase family. In terms of assembly, monomer.

It localises to the cytoplasm. Its subcellular location is the nucleus. In terms of biological role, S-adenosyl-L-methionine-dependent protein-arginine N-methyltransferase that methylates the delta-nitrogen atom of arginine residues to form N5-methylarginine (type IV) in target proteins. Monomethylates ribosomal protein L12. The protein is Protein arginine N-methyltransferase 2 of Neurospora crassa (strain ATCC 24698 / 74-OR23-1A / CBS 708.71 / DSM 1257 / FGSC 987).